A 539-amino-acid polypeptide reads, in one-letter code: Eukaryotic translation initiation factor 3 subunit L (539 aa).

The PCI domain occupies 306-514 (TFSDILLYIQ…IHIADTKVSH (209 aa)).

Belongs to the eIF-3 subunit L family. Component of the eukaryotic translation initiation factor 3 (eIF-3) complex. The eIF-3 complex interacts with pix.

The protein resides in the cytoplasm. Its function is as follows. Component of the eukaryotic translation initiation factor 3 (eIF-3) complex, which is involved in protein synthesis of a specialized repertoire of mRNAs and, together with other initiation factors, stimulates binding of mRNA and methionyl-tRNAi to the 40S ribosome. The eIF-3 complex specifically targets and initiates translation of a subset of mRNAs involved in cell proliferation. This Drosophila sechellia (Fruit fly) protein is Eukaryotic translation initiation factor 3 subunit L.